The following is a 61-amino-acid chain: Small ribosomal subunit protein uS14 (61 aa).

Residues C24, C27, C40, and C43 each coordinate Zn(2+).

Belongs to the universal ribosomal protein uS14 family. Zinc-binding uS14 subfamily. Part of the 30S ribosomal subunit. Contacts proteins S3 and S10. It depends on Zn(2+) as a cofactor.

Its function is as follows. Binds 16S rRNA, required for the assembly of 30S particles and may also be responsible for determining the conformation of the 16S rRNA at the A site. The protein is Small ribosomal subunit protein uS14 of Mycoplasmopsis pulmonis (strain UAB CTIP) (Mycoplasma pulmonis).